Here is a 288-residue protein sequence, read N- to C-terminus: Phosphate import ATP-binding protein PstB (288 aa).

An ABC transporter domain is found at 42–283 (IRDLNFYYEN…PKEKKTRDYI (242 aa)). Residue 74-81 (GPSGCGKS) coordinates ATP.

This sequence belongs to the ABC transporter superfamily. Phosphate importer (TC 3.A.1.7) family. As to quaternary structure, the complex is composed of two ATP-binding proteins (PstB), two transmembrane proteins (PstC and PstA) and a solute-binding protein (PstS).

The protein resides in the cell membrane. It carries out the reaction phosphate(out) + ATP + H2O = ADP + 2 phosphate(in) + H(+). Part of the ABC transporter complex PstSACB involved in phosphate import. Responsible for energy coupling to the transport system. This chain is Phosphate import ATP-binding protein PstB, found in Malacoplasma penetrans (strain HF-2) (Mycoplasma penetrans).